Here is a 124-residue protein sequence, read N- to C-terminus: Holo-[acyl-carrier-protein] synthase (124 aa).

Mg(2+) contacts are provided by D7 and E55.

This sequence belongs to the P-Pant transferase superfamily. AcpS family. Mg(2+) serves as cofactor.

It is found in the cytoplasm. The catalysed reaction is apo-[ACP] + CoA = holo-[ACP] + adenosine 3',5'-bisphosphate + H(+). Functionally, transfers the 4'-phosphopantetheine moiety from coenzyme A to a Ser of acyl-carrier-protein. The polypeptide is Holo-[acyl-carrier-protein] synthase (Borreliella burgdorferi (strain ATCC 35210 / DSM 4680 / CIP 102532 / B31) (Borrelia burgdorferi)).